A 134-amino-acid chain; its full sequence is L-ectoine synthase (134 aa).

The protein belongs to the ectoine synthase family.

The enzyme catalyses (2S)-4-acetamido-2-aminobutanoate = L-ectoine + H2O. It participates in amine and polyamine biosynthesis; ectoine biosynthesis; L-ectoine from L-aspartate 4-semialdehyde: step 3/3. Its function is as follows. Catalyzes the circularization of gamma-N-acetyl-alpha,gamma-diaminobutyric acid (ADABA) to ectoine (1,4,5,6-tetrahydro-2-methyl-4-pyrimidine carboxylic acid), which is an excellent osmoprotectant. The polypeptide is L-ectoine synthase (Thermobifida fusca (strain YX)).